The primary structure comprises 422 residues: Phagosome assembly factor 1 (422 aa).

The protein belongs to the PHAF1 family. Interacts with BCAS3; the interaction is requrired for the association with the phagophore.

The protein resides in the cytoplasm. It is found in the preautophagosomal structure. Its function is as follows. Plays a regulatory role in autophagic activity. In complex with BCAS3, associates with the autophagosome formation site during both non-selective and selective autophagy. The sequence is that of Phagosome assembly factor 1 from Homo sapiens (Human).